A 280-amino-acid chain; its full sequence is Phosphonates import ATP-binding protein PhnC 1 (280 aa).

An ABC transporter domain is found at 2–246 (LRIENLDKRY…VLTRIYGEED (245 aa)). Residue 35–42 (GPSGAGKS) coordinates ATP. Residues 247–266 (WSKTSDEDADSVDAPPRAAD) are disordered.

The protein belongs to the ABC transporter superfamily. Phosphonates importer (TC 3.A.1.9.1) family. As to quaternary structure, the complex is composed of two ATP-binding proteins (PhnC), two transmembrane proteins (PhnE) and a solute-binding protein (PhnD).

It localises to the cell inner membrane. It carries out the reaction phosphonate(out) + ATP + H2O = phosphonate(in) + ADP + phosphate + H(+). In terms of biological role, part of the ABC transporter complex PhnCDE involved in phosphonates import. Responsible for energy coupling to the transport system. This chain is Phosphonates import ATP-binding protein PhnC 1, found in Rhodopseudomonas palustris (strain HaA2).